The sequence spans 118 residues: Large ribosomal subunit protein uL18 (118 aa).

This sequence belongs to the universal ribosomal protein uL18 family. As to quaternary structure, part of the 50S ribosomal subunit; part of the 5S rRNA/L5/L18/L25 subcomplex. Contacts the 5S and 23S rRNAs.

In terms of biological role, this is one of the proteins that bind and probably mediate the attachment of the 5S RNA into the large ribosomal subunit, where it forms part of the central protuberance. The polypeptide is Large ribosomal subunit protein uL18 (Helicobacter hepaticus (strain ATCC 51449 / 3B1)).